A 432-amino-acid polypeptide reads, in one-letter code: Trigger factor (432 aa).

One can recognise a PPIase FKBP-type domain in the interval 161 to 246; that stretch reads EDRVTIDFTG…LKKVEERELP (86 aa).

This sequence belongs to the FKBP-type PPIase family. Tig subfamily.

Its subcellular location is the cytoplasm. The enzyme catalyses [protein]-peptidylproline (omega=180) = [protein]-peptidylproline (omega=0). Its function is as follows. Involved in protein export. Acts as a chaperone by maintaining the newly synthesized protein in an open conformation. Functions as a peptidyl-prolyl cis-trans isomerase. In Salmonella schwarzengrund (strain CVM19633), this protein is Trigger factor.